We begin with the raw amino-acid sequence, 436 residues long: GTPase Der (436 aa).

2 EngA-type G domains span residues 4-167 and 175-351; these read PTVA…PTEV and IRFS…ESQN. Residues 10–17, 57–61, 119–122, 181–188, 229–233, and 294–297 each bind GTP; these read GRPNVGKS, DTGGI, NKVD, DTAGM, and NKWD. A KH-like domain is found at 352-436; it reads RRISSAVLND…PIHLIARKRK (85 aa).

It belongs to the TRAFAC class TrmE-Era-EngA-EngB-Septin-like GTPase superfamily. EngA (Der) GTPase family. Associates with the 50S ribosomal subunit.

In terms of biological role, GTPase that plays an essential role in the late steps of ribosome biogenesis. The chain is GTPase Der from Streptococcus thermophilus (strain ATCC BAA-491 / LMD-9).